The following is a 95-amino-acid chain: MGNETGKETSGKEQDKVKDVIIRLVEEDGRIAVYLVQGLNTEFLGYADEIQLAKEIAKLNKFISIWRLNPLDHRLRDYLRQEIIERLVRVMAYMM.

This is an uncharacterized protein from Acidianus hospitalis (AFV-1).